The sequence spans 419 residues: Adenylosuccinate synthetase (419 aa).

Residues 12 to 18 and 40 to 42 contribute to the GTP site; these read GDEGKGK and GHT. Asp13 functions as the Proton acceptor in the catalytic mechanism. Mg(2+) contacts are provided by Asp13 and Gly40. Residues 13 to 16, 38 to 41, Thr128, Arg142, Gln220, Thr235, and Arg299 each bind IMP; these read DEGK and NAGH. Catalysis depends on His41, which acts as the Proton donor. 295–301 contributes to the substrate binding site; sequence SITKRPR. GTP-binding positions include Arg301, 327 to 329, and 407 to 409; these read KSD and SLG.

Belongs to the adenylosuccinate synthetase family. Homodimer. Mg(2+) is required as a cofactor.

The protein resides in the cytoplasm. It catalyses the reaction IMP + L-aspartate + GTP = N(6)-(1,2-dicarboxyethyl)-AMP + GDP + phosphate + 2 H(+). It functions in the pathway purine metabolism; AMP biosynthesis via de novo pathway; AMP from IMP: step 1/2. In terms of biological role, plays an important role in the de novo pathway of purine nucleotide biosynthesis. Catalyzes the first committed step in the biosynthesis of AMP from IMP. The sequence is that of Adenylosuccinate synthetase from Azobacteroides pseudotrichonymphae genomovar. CFP2.